A 256-amino-acid polypeptide reads, in one-letter code: SPX domain-containing protein 1 (256 aa).

In terms of domain architecture, SPX spans M1–Q155. Positions K30–R46 match the Bipartite nuclear localization signal motif.

As to quaternary structure, interacts with PHR1 in a highly Pi-dependent manner.

It is found in the nucleus. Its function is as follows. Plays a positive role in plant adaptation to phosphate starvation. Inhibits PHR1 DNA-binding activity in a Pi-dependent manner. This Arabidopsis thaliana (Mouse-ear cress) protein is SPX domain-containing protein 1.